The primary structure comprises 464 residues: Bifunctional protein GlmU (464 aa).

Residues Met-1–Arg-236 form a pyrophosphorylase region. Residues Leu-6–Gly-9, Lys-20, and Gly-77–Thr-78 contribute to the UDP-N-acetyl-alpha-D-glucosamine site. Residue Asp-102 coordinates Mg(2+). Residues Gly-145, Glu-161, Asn-176, and Asn-234 each coordinate UDP-N-acetyl-alpha-D-glucosamine. Residue Asn-234 participates in Mg(2+) binding. The interval Trp-237 to Arg-257 is linker. An N-acetyltransferase region spans residues Gly-258 to Asp-464. Positions 340 and 358 each coordinate UDP-N-acetyl-alpha-D-glucosamine. The active-site Proton acceptor is His-370. Positions 373 and 384 each coordinate UDP-N-acetyl-alpha-D-glucosamine. Residues Ala-387, Asn-393–Tyr-394, Ser-412, Gly-430, and Arg-447 each bind acetyl-CoA.

This sequence in the N-terminal section; belongs to the N-acetylglucosamine-1-phosphate uridyltransferase family. It in the C-terminal section; belongs to the transferase hexapeptide repeat family. In terms of assembly, homotrimer. Requires Mg(2+) as cofactor.

The protein localises to the cytoplasm. The catalysed reaction is alpha-D-glucosamine 1-phosphate + acetyl-CoA = N-acetyl-alpha-D-glucosamine 1-phosphate + CoA + H(+). The enzyme catalyses N-acetyl-alpha-D-glucosamine 1-phosphate + UTP + H(+) = UDP-N-acetyl-alpha-D-glucosamine + diphosphate. Its pathway is nucleotide-sugar biosynthesis; UDP-N-acetyl-alpha-D-glucosamine biosynthesis; N-acetyl-alpha-D-glucosamine 1-phosphate from alpha-D-glucosamine 6-phosphate (route II): step 2/2. The protein operates within nucleotide-sugar biosynthesis; UDP-N-acetyl-alpha-D-glucosamine biosynthesis; UDP-N-acetyl-alpha-D-glucosamine from N-acetyl-alpha-D-glucosamine 1-phosphate: step 1/1. It participates in bacterial outer membrane biogenesis; LPS lipid A biosynthesis. In terms of biological role, catalyzes the last two sequential reactions in the de novo biosynthetic pathway for UDP-N-acetylglucosamine (UDP-GlcNAc). The C-terminal domain catalyzes the transfer of acetyl group from acetyl coenzyme A to glucosamine-1-phosphate (GlcN-1-P) to produce N-acetylglucosamine-1-phosphate (GlcNAc-1-P), which is converted into UDP-GlcNAc by the transfer of uridine 5-monophosphate (from uridine 5-triphosphate), a reaction catalyzed by the N-terminal domain. The protein is Bifunctional protein GlmU of Aquifex aeolicus (strain VF5).